The sequence spans 124 residues: Large ribosomal subunit protein bL12 (124 aa).

This sequence belongs to the bacterial ribosomal protein bL12 family. In terms of assembly, homodimer. Part of the ribosomal stalk of the 50S ribosomal subunit. Forms a multimeric L10(L12)X complex, where L10 forms an elongated spine to which 2 to 4 L12 dimers bind in a sequential fashion. Binds GTP-bound translation factors.

Forms part of the ribosomal stalk which helps the ribosome interact with GTP-bound translation factors. Is thus essential for accurate translation. The polypeptide is Large ribosomal subunit protein bL12 (Azobacteroides pseudotrichonymphae genomovar. CFP2).